The following is a 466-amino-acid chain: Ribulose bisphosphate carboxylase large chain (466 aa).

N6,N6,N6-trimethyllysine is present on lysine 4. Substrate is bound by residues asparagine 113 and threonine 163. Lysine 165 functions as the Proton acceptor in the catalytic mechanism. Residue lysine 167 participates in substrate binding. Residues lysine 191, aspartate 193, and glutamate 194 each contribute to the Mg(2+) site. The residue at position 191 (lysine 191) is an N6-carboxylysine. Catalysis depends on histidine 284, which acts as the Proton acceptor. Substrate contacts are provided by arginine 285, histidine 317, and serine 369.

It belongs to the RuBisCO large chain family. Type I subfamily. Heterohexadecamer of 8 large chains and 8 small chains; disulfide-linked. The disulfide link is formed within the large subunit homodimers. The cofactor is Mg(2+). In terms of processing, the disulfide bond which can form in the large chain dimeric partners within the hexadecamer appears to be associated with oxidative stress and protein turnover.

It localises to the plastid. The protein localises to the chloroplast. It carries out the reaction 2 (2R)-3-phosphoglycerate + 2 H(+) = D-ribulose 1,5-bisphosphate + CO2 + H2O. It catalyses the reaction D-ribulose 1,5-bisphosphate + O2 = 2-phosphoglycolate + (2R)-3-phosphoglycerate + 2 H(+). Functionally, ruBisCO catalyzes two reactions: the carboxylation of D-ribulose 1,5-bisphosphate, the primary event in carbon dioxide fixation, as well as the oxidative fragmentation of the pentose substrate in the photorespiration process. Both reactions occur simultaneously and in competition at the same active site. This is Ribulose bisphosphate carboxylase large chain from Pinguicula caerulea (Blueflower butterwort).